The primary structure comprises 430 residues: Anaerobic glycerol-3-phosphate dehydrogenase subunit B (430 aa).

It belongs to the anaerobic G-3-P dehydrogenase subunit B family. As to quaternary structure, composed of a catalytic GlpA/B dimer and of membrane bound GlpC. FMN serves as cofactor.

The enzyme catalyses a quinone + sn-glycerol 3-phosphate = dihydroxyacetone phosphate + a quinol. The protein operates within polyol metabolism; glycerol degradation via glycerol kinase pathway; glycerone phosphate from sn-glycerol 3-phosphate (anaerobic route): step 1/1. In terms of biological role, conversion of glycerol 3-phosphate to dihydroxyacetone. Uses fumarate or nitrate as electron acceptor. In Actinobacillus succinogenes (strain ATCC 55618 / DSM 22257 / CCUG 43843 / 130Z), this protein is Anaerobic glycerol-3-phosphate dehydrogenase subunit B.